The primary structure comprises 130 residues: Protein ApaG (130 aa).

In terms of domain architecture, ApaG spans 3-127; sequence SAVTRGIEVT…FSLDVPEQRR (125 aa).

This Brucella abortus (strain S19) protein is Protein ApaG.